The sequence spans 915 residues: Probable LRR receptor-like serine/threonine-protein kinase At2g16250 (915 aa).

An N-terminal signal peptide occupies residues 1–28 (MVDQRRSALGFVLLLLCLVLFFDCVVVG). Over 29 to 451 (QTQSRFSEKL…ISRRTVIILA (423 aa)) the chain is Extracellular. N-linked (GlcNAc...) asparagine glycans are attached at residues asparagine 71, asparagine 78, asparagine 101, asparagine 109, asparagine 150, asparagine 158, and asparagine 177. 11 LRR repeats span residues 102–125 (LTRLSYFNASGLALPGTIPEWFGV), 127–150 (LLALEVLDLSSCSVNGVVPFTLGN), 151–174 (LTSLRTLNLSQNSLTSLVPSSLGQ), 176–198 (LNLSQLDLSRNSFTGVLPQSFSS), 199–223 (LKNLLTLDVSSNYLTGPIPPGLGAL), 225–247 (KLIHLNFSSNSFSSPIPSELGDL), 248–271 (VNLVDFDLSINSLSGSVPQELRKL), 272–295 (SKLQLMAIGDNLLSGTLPVDLFSA), 297–320 (SQLQTLVLRENGFSGSLPDVCWSL), 321–344 (PKLRILDIAKNNFTGLLPYSSYDS), and 366–390 (LRRFRIMDLSGNYFEGKLPDYVTGE). Residue asparagine 230 is glycosylated (N-linked (GlcNAc...) asparagine). Asparagine 332 carries an N-linked (GlcNAc...) asparagine glycan. 3 N-linked (GlcNAc...) asparagine glycosylation sites follow: asparagine 391, asparagine 429, and asparagine 437. The chain crosses the membrane as a helical span at residues 452-472 (AVGGGVAFILLFVILPIILVL). The Cytoplasmic segment spans residues 473–915 (CMRHRRRAAQ…AAYGVVEDNL (443 aa)). The interval 482-503 (QRGNNDRPKPAGEASQQPPKGA) is disordered. The 285-residue stretch at 527-811 (FNDANLIKRG…IVNALENPLK (285 aa)) folds into the Protein kinase domain. ATP contacts are provided by residues 533–541 (IKRGHSGNL) and lysine 555. Aspartate 657 functions as the Proton acceptor in the catalytic mechanism. The interval 851 to 915 (TAVQAGATTS…AAYGVVEDNL (65 aa)) is disordered. Positions 859 to 870 (TSGGGGGGGGNG) are enriched in gly residues. The segment covering 871 to 892 (LRNSGSQGSSGRNNNNNGNSSS) has biased composition (low complexity).

Belongs to the protein kinase superfamily. Ser/Thr protein kinase family.

It localises to the membrane. It catalyses the reaction L-seryl-[protein] + ATP = O-phospho-L-seryl-[protein] + ADP + H(+). The catalysed reaction is L-threonyl-[protein] + ATP = O-phospho-L-threonyl-[protein] + ADP + H(+). In Arabidopsis thaliana (Mouse-ear cress), this protein is Probable LRR receptor-like serine/threonine-protein kinase At2g16250.